Here is a 146-residue protein sequence, read N- to C-terminus: Catabolic 3-dehydroquinase (146 aa).

Y24 functions as the Proton acceptor in the catalytic mechanism. Substrate is bound by residues N78, H84, and D91. The Proton donor role is filled by H104. Substrate-binding positions include 105–106 (IT) and R115.

This sequence belongs to the type-II 3-dehydroquinase family. As to quaternary structure, homododecamer. Adopts a ring-like structure, composed of an arrangement of two hexameric rings stacked on top of one another.

The catalysed reaction is 3-dehydroquinate = 3-dehydroshikimate + H2O. The protein operates within aromatic compound metabolism; 3,4-dihydroxybenzoate biosynthesis; 3,4-dihydroxybenzoate from 3-dehydroquinate: step 1/2. Its function is as follows. Is involved in the catabolism of quinate. Allows the utilization of quinate as carbon source via the beta-ketoadipate pathway. The protein is Catabolic 3-dehydroquinase of Meyerozyma guilliermondii (strain ATCC 6260 / CBS 566 / DSM 6381 / JCM 1539 / NBRC 10279 / NRRL Y-324) (Yeast).